The sequence spans 137 residues: Large ribosomal subunit protein bL12 (137 aa).

The protein belongs to the bacterial ribosomal protein bL12 family. In terms of assembly, homodimer. Part of the ribosomal stalk of the 50S ribosomal subunit. Forms a multimeric L10(L12)X complex, where L10 forms an elongated spine to which 2 to 4 L12 dimers bind in a sequential fashion. Binds GTP-bound translation factors.

Functionally, forms part of the ribosomal stalk which helps the ribosome interact with GTP-bound translation factors. Is thus essential for accurate translation. The chain is Large ribosomal subunit protein bL12 from Gloeobacter violaceus (strain ATCC 29082 / PCC 7421).